We begin with the raw amino-acid sequence, 795 residues long: Phenylalanine--tRNA ligase beta subunit (795 aa).

A tRNA-binding domain is found at Ala39 to Arg148. Positions Pro401–Asn476 constitute a B5 domain. Residues Asp454, Asp460, Glu463, and Glu464 each coordinate Mg(2+). The 94-residue stretch at Ser701–Arg794 folds into the FDX-ACB domain.

The protein belongs to the phenylalanyl-tRNA synthetase beta subunit family. Type 1 subfamily. Tetramer of two alpha and two beta subunits. Mg(2+) is required as a cofactor.

The protein localises to the cytoplasm. The enzyme catalyses tRNA(Phe) + L-phenylalanine + ATP = L-phenylalanyl-tRNA(Phe) + AMP + diphosphate + H(+). This chain is Phenylalanine--tRNA ligase beta subunit (pheT), found in Vibrio cholerae serotype O1 (strain ATCC 39315 / El Tor Inaba N16961).